The sequence spans 76 residues: Conotoxin TxMEKL-011 (76 aa).

The signal sequence occupies residues 1–19 (MEKLTILLLVAAVLMSTQA). Positions 20-45 (LVERAGENRSKENIKFLLKRKRAADR) are excised as a propeptide. Intrachain disulfides connect cysteine 51/cysteine 65, cysteine 58/cysteine 69, and cysteine 64/cysteine 73.

It belongs to the conotoxin O2 superfamily. In terms of tissue distribution, expressed by the venom duct.

Its subcellular location is the secreted. In Conus textile (Cloth-of-gold cone), this protein is Conotoxin TxMEKL-011.